The chain runs to 193 residues: Secreted RxLR effector protein 126 (193 aa).

Residues 1-20 (MRYLLAVLIAAAFVISSGTS) form the signal peptide. A RxLR-dEER motif is present at residues 50-64 (RMLQTKAVNGLEEER).

Belongs to the RxLR effector family.

The protein resides in the secreted. It is found in the host membrane. Its function is as follows. Secreted effector that completely suppresses the host cell death induced by cell death-inducing proteins. The polypeptide is Secreted RxLR effector protein 126 (Plasmopara viticola (Downy mildew of grapevine)).